The chain runs to 450 residues: ATP-dependent protease ATPase subunit HslU (450 aa).

ATP contacts are provided by residues Val-29, 71 to 76 (GVGKTE), Asp-261, Glu-328, and Arg-400.

It belongs to the ClpX chaperone family. HslU subfamily. In terms of assembly, a double ring-shaped homohexamer of HslV is capped on each side by a ring-shaped HslU homohexamer. The assembly of the HslU/HslV complex is dependent on binding of ATP.

The protein localises to the cytoplasm. Functionally, ATPase subunit of a proteasome-like degradation complex; this subunit has chaperone activity. The binding of ATP and its subsequent hydrolysis by HslU are essential for unfolding of protein substrates subsequently hydrolyzed by HslV. HslU recognizes the N-terminal part of its protein substrates and unfolds these before they are guided to HslV for hydrolysis. The chain is ATP-dependent protease ATPase subunit HslU from Rickettsia prowazekii (strain Madrid E).